The sequence spans 829 residues: Venom phosphodiesterase CdcPDE (829 aa).

SMB domains are found at residues 8–51 and 52–96; these read PQVS…VLPT and QSWS…GETS. Intrachain disulfides connect Cys12–Cys16, Cys12–Cys29, Cys16–Cys47, Cys27–Cys29, Cys27–Cys40, Cys33–Cys39, Cys40–Cys47, Cys56–Cys61, Cys56–Cys73, Cys61–Cys91, Cys71–Cys73, Cys71–Cys84, Cys77–Cys83, Cys84–Cys91, Cys102–Cys148, and Cys110–Cys322. Asn17 carries N-linked (GlcNAc...) asparagine glycosylation. A Cell attachment site motif is present at residues 36-38; it reads RQA. Asp125 and Thr163 together coordinate a divalent metal cation. Residue Thr163 is the AMP-threonine intermediate of the active site. Asn194 and Asn237 each carry an N-linked (GlcNAc...) asparagine glycan. Lys249 lines the AMP pocket. Residues Asp283, His287, Asp330, and His331 each contribute to the a divalent metal cation site. Residue His287 participates in AMP binding. Intrachain disulfides connect Cys338–Cys435, Cys386–Cys771, Cys519–Cys577, Cys532–Cys632, Cys534–Cys617, and Cys740–Cys750. Residue Asn383 is glycosylated (N-linked (GlcNAc...) asparagine). Residue His440 participates in a divalent metal cation binding. N-linked (GlcNAc...) asparagine glycans are attached at residues Asn572 and Asn652.

It belongs to the nucleotide pyrophosphatase/phosphodiesterase family. In terms of assembly, monomer. A divalent metal cation is required as a cofactor. Post-translationally, N-glycosylated. Glycosylation counts for an increased mass of ~9%. In terms of processing, contains 16 disulfide bonds. As to expression, expressed by venom gland.

The protein localises to the secreted. It catalyses the reaction ADP + H2O = AMP + phosphate + H(+). In terms of biological role, hydrolyzes ADP with high activity. Shows weak or no activity on 5'-AMP, 5'-GMP, 3'-AMP, ATP, cAMP, and cGMP. Is devoid of monophosphatase and proteinase activities. Inhibits ADP-induced platelet aggregation and is cytotoxic to human keratinocytes. Kinetic parameters indicated a higher affinity for the substrate bis(p-nitrophenyl) phosphate compared to others snake venom PDEs. Is recognized by the crotalid antivenom produced by the Instituto Butantan. The protein is Venom phosphodiesterase CdcPDE of Crotalus durissus collilineatus (Brazilian rattlesnake).